Here is a 326-residue protein sequence, read N- to C-terminus: Flap endonuclease 1 (326 aa).

The N-domain stretch occupies residues 1-98 (MGVQFGDFIP…KTRKVRREMK (98 aa)). Positions 27, 80, 152, 154, 173, 175, and 224 each coordinate Mg(2+). The I-domain stretch occupies residues 116–245 (EAAKYAKRVS…KRAYELVRSG (130 aa)). An interaction with PCNA region spans residues 317–325 (KQKTLDAWF).

This sequence belongs to the XPG/RAD2 endonuclease family. FEN1 subfamily. As to quaternary structure, interacts with PCNA. PCNA stimulates the nuclease activity without altering cleavage specificity. Requires Mg(2+) as cofactor.

Structure-specific nuclease with 5'-flap endonuclease and 5'-3' exonuclease activities involved in DNA replication and repair. During DNA replication, cleaves the 5'-overhanging flap structure that is generated by displacement synthesis when DNA polymerase encounters the 5'-end of a downstream Okazaki fragment. Binds the unpaired 3'-DNA end and kinks the DNA to facilitate 5' cleavage specificity. Cleaves one nucleotide into the double-stranded DNA from the junction in flap DNA, leaving a nick for ligation. Also involved in the base excision repair (BER) pathway. Acts as a genome stabilization factor that prevents flaps from equilibrating into structures that lead to duplications and deletions. Also possesses 5'-3' exonuclease activity on nicked or gapped double-stranded DNA. The protein is Flap endonuclease 1 of Methanocaldococcus jannaschii (strain ATCC 43067 / DSM 2661 / JAL-1 / JCM 10045 / NBRC 100440) (Methanococcus jannaschii).